The primary structure comprises 292 residues: MPELPEVEVTRRGLLPHVVGRRIAAVTVRHRGLRWPVDPQLEMRLAQRVVRRIERRGKYLLLECVSEAAGEPAGWLLVHLGMTGTLRVLPEAPSPGAHDHLDLVLAPGPGAALGTKPGTIVLRFRDPRRFGAILWSTLPEAELPSHPLLRTLGIEPFDPAFDGAWLHRHTRGRSAAIKTVLLAGGIVVGVGNIYASESLFRAGIRPTTPAGRLSRARCDRLAQAVRETLAQAIERGGSTLRDFVGSDGASGYFQLDCLVYDRAGQPCRVCATPVRQIVQGQRSTFYCPNCQH.

Pro-2 serves as the catalytic Schiff-base intermediate with DNA. Residue Glu-3 is the Proton donor of the active site. Lys-58 serves as the catalytic Proton donor; for beta-elimination activity. DNA contacts are provided by His-98, Arg-128, and Arg-173. The FPG-type zinc-finger motif lies at 258-292; it reads LVYDRAGQPCRVCATPVRQIVQGQRSTFYCPNCQH. The active-site Proton donor; for delta-elimination activity is the Arg-282.

This sequence belongs to the FPG family. In terms of assembly, monomer. The cofactor is Zn(2+).

It catalyses the reaction Hydrolysis of DNA containing ring-opened 7-methylguanine residues, releasing 2,6-diamino-4-hydroxy-5-(N-methyl)formamidopyrimidine.. The enzyme catalyses 2'-deoxyribonucleotide-(2'-deoxyribose 5'-phosphate)-2'-deoxyribonucleotide-DNA = a 3'-end 2'-deoxyribonucleotide-(2,3-dehydro-2,3-deoxyribose 5'-phosphate)-DNA + a 5'-end 5'-phospho-2'-deoxyribonucleoside-DNA + H(+). Involved in base excision repair of DNA damaged by oxidation or by mutagenic agents. Acts as a DNA glycosylase that recognizes and removes damaged bases. Has a preference for oxidized purines, such as 7,8-dihydro-8-oxoguanine (8-oxoG). Has AP (apurinic/apyrimidinic) lyase activity and introduces nicks in the DNA strand. Cleaves the DNA backbone by beta-delta elimination to generate a single-strand break at the site of the removed base with both 3'- and 5'-phosphates. The protein is Formamidopyrimidine-DNA glycosylase of Cupriavidus necator (strain ATCC 17699 / DSM 428 / KCTC 22496 / NCIMB 10442 / H16 / Stanier 337) (Ralstonia eutropha).